The chain runs to 613 residues: Glucose-6-phosphate isomerase 1, chloroplastic (613 aa).

Positions 1 to 14 (MASLSGLYSSSPSL) are enriched in low complexity. The disordered stretch occupies residues 1-21 (MASLSGLYSSSPSLKPAKNHS). The transit peptide at 1 to 48 (MASLSGLYSSSPSLKPAKNHSFKALPAQSRDSFSFPHTSKPTNLPLTL) directs the protein to the chloroplast. The Proton donor role is filled by E392. Active-site residues include H421 and K526. S595 carries the post-translational modification Phosphoserine.

It belongs to the GPI family.

The protein resides in the plastid. It is found in the chloroplast stroma. It carries out the reaction alpha-D-glucose 6-phosphate = beta-D-fructose 6-phosphate. It functions in the pathway carbohydrate degradation; glycolysis; D-glyceraldehyde 3-phosphate and glycerone phosphate from D-glucose: step 2/4. It participates in carbohydrate biosynthesis; gluconeogenesis. Inhibited by glycerol-3-P (G3P). Functionally, promotes the synthesis of starch in leaves. This Arabidopsis thaliana (Mouse-ear cress) protein is Glucose-6-phosphate isomerase 1, chloroplastic (PGI1).